A 221-amino-acid polypeptide reads, in one-letter code: Tetraspanin-2 (221 aa).

Residues 1–13 are Cytoplasmic-facing; sequence MGRFRGGLRCIKY. The chain crosses the membrane as a helical span at residues 14 to 34; the sequence is LLLGFNLLFWLAGSAVIAFGL. The Extracellular segment spans residues 35–54; sequence WFRFGGTMKDLSSEDKSPEY. A helical membrane pass occupies residues 55 to 75; sequence FYVGLYVLVGAGALMMTVGFF. Residues 76 to 90 are Cytoplasmic-facing; it reads GCCGAMRESQCVLGS. A helical membrane pass occupies residues 91–111; the sequence is FFTCLLVIFAAEVTTGVFAFI. Over 112 to 188 the chain is Extracellular; the sequence is GKDVAIRHVQ…ETVISAKLQL (77 aa). The N-linked (GlcNAc...) asparagine glycan is linked to asparagine 139. The helical transmembrane segment at 189 to 209 threads the bilayer; the sequence is IGIVGIGIAGLTIFGMIFSMV. Topologically, residues 210–221 are cytoplasmic; that stretch reads LCCAIRNSRDVI.

The protein belongs to the tetraspanin (TM4SF) family.

The protein resides in the membrane. Its function is as follows. May play a role in signalling in oligodendrocytes in the early stages of their terminal differentiation into myelin-forming glia and may also function in stabilizing the mature sheath. In Mus musculus (Mouse), this protein is Tetraspanin-2 (Tspan2).